Consider the following 218-residue polypeptide: Small ribosomal subunit protein mS34 (218 aa).

Residues 180-218 form a disordered region; that stretch reads KNGDTSTEEPMLNVQRIRMEPWDYPAKQEDKGRAKGTPV. Basic and acidic residues predominate over residues 196–212; it reads IRMEPWDYPAKQEDKGR.

This sequence belongs to the mitochondrion-specific ribosomal protein mS34 family. In terms of assembly, component of the mitochondrial small ribosomal subunit (mt-SSU). Mature mammalian 55S mitochondrial ribosomes consist of a small (28S) and a large (39S) subunit. The 28S small subunit contains a 12S ribosomal RNA (12S mt-rRNA) and 30 different proteins. The 39S large subunit contains a 16S rRNA (16S mt-rRNA), a copy of mitochondrial valine transfer RNA (mt-tRNA(Val)), which plays an integral structural role, and 52 different proteins.

Its subcellular location is the mitochondrion. Functionally, required for mitochondrial translation, plays a role in maintaining the stability of the small ribosomal subunit and the 12S rRNA that are required for mitoribosome formation. The chain is Small ribosomal subunit protein mS34 (MRPS34) from Homo sapiens (Human).